Here is a 185-residue protein sequence, read N- to C-terminus: Ribosome-recycling factor (185 aa).

It belongs to the RRF family.

The protein resides in the cytoplasm. Its function is as follows. Responsible for the release of ribosomes from messenger RNA at the termination of protein biosynthesis. May increase the efficiency of translation by recycling ribosomes from one round of translation to another. The protein is Ribosome-recycling factor of Carboxydothermus hydrogenoformans (strain ATCC BAA-161 / DSM 6008 / Z-2901).